A 90-amino-acid chain; its full sequence is PIK3R3 upstream open reading frame protein (90 aa).

The interval 1-63 is disordered; it reads MGPSQLVRAP…PASEATNISD (63 aa). Residues 27-46 are compositionally biased toward basic residues; the sequence is PRRRCPSMFKCSRRTYRQKP. Residues 50 to 63 show a composition bias toward polar residues; sequence TATNPASEATNISD.

This chain is PIK3R3 upstream open reading frame protein, found in Mus musculus (Mouse).